A 417-amino-acid chain; its full sequence is Exodeoxyribonuclease 7 large subunit (417 aa).

The protein belongs to the XseA family. As to quaternary structure, heterooligomer composed of large and small subunits.

The protein localises to the cytoplasm. The catalysed reaction is Exonucleolytic cleavage in either 5'- to 3'- or 3'- to 5'-direction to yield nucleoside 5'-phosphates.. Bidirectionally degrades single-stranded DNA into large acid-insoluble oligonucleotides, which are then degraded further into small acid-soluble oligonucleotides. This Lactococcus lactis subsp. cremoris (strain MG1363) protein is Exodeoxyribonuclease 7 large subunit.